The sequence spans 633 residues: Threonine--tRNA ligase (633 aa).

The 59-residue stretch at 1 to 59 folds into the TGS domain; it reads MIKVTFLAEQKVKEYSGRVTGFDILQPDALREAIAFKVNGELYDLSREIESDTEIEVIQ. The segment at 240-532 is catalytic; the sequence is DHRKIAKDMD…LIENYAGKFP (293 aa). Zn(2+) contacts are provided by cysteine 332, histidine 383, and histidine 509.

This sequence belongs to the class-II aminoacyl-tRNA synthetase family. Homodimer. Zn(2+) serves as cofactor.

It localises to the cytoplasm. The enzyme catalyses tRNA(Thr) + L-threonine + ATP = L-threonyl-tRNA(Thr) + AMP + diphosphate + H(+). Catalyzes the attachment of threonine to tRNA(Thr) in a two-step reaction: L-threonine is first activated by ATP to form Thr-AMP and then transferred to the acceptor end of tRNA(Thr). Also edits incorrectly charged L-seryl-tRNA(Thr). In Wolbachia pipientis subsp. Culex pipiens (strain wPip), this protein is Threonine--tRNA ligase.